The following is a 207-amino-acid chain: MSFVPYSLPELPYDYDALEPVISSEIMILHHQKHHQIYINNLNAALKRLDAAETQQNLNELIALEPALRFNGGGHINHSLFWETLAPIDQGGGQPPKHELLSLIERFWGTMDNFLKKLIEVAAGVQGSGWAWLGFCPAKQELVLQATANQDPLEPLTGKLPLLGVDVWEHAYYLQYKNVRMDYLKAFPQIINWGHIENRFSEIISSK.

Mn(2+)-binding residues include His-30, His-78, Asp-166, and His-170.

This sequence belongs to the iron/manganese superoxide dismutase family. As to quaternary structure, homodimer. Mn(2+) is required as a cofactor.

The enzyme catalyses 2 superoxide + 2 H(+) = H2O2 + O2. Its function is as follows. Destroys superoxide anion radicals which are normally produced within the cells and which are toxic to biological systems. The sequence is that of Superoxide dismutase [Mn] (sodA) from Chlamydia pneumoniae (Chlamydophila pneumoniae).